A 589-amino-acid polypeptide reads, in one-letter code: Oligo-1,6-glucosidase IMA3 (589 aa).

Catalysis depends on Asp215, which acts as the Nucleophile. Glu277 functions as the Proton donor in the catalytic mechanism.

This sequence belongs to the glycosyl hydrolase 13 family.

It localises to the cytoplasm. It catalyses the reaction Hydrolysis of (1-&gt;6)-alpha-D-glucosidic linkages in some oligosaccharides produced from starch and glycogen by alpha-amylase, and in isomaltose.. Its function is as follows. Alpha-glucosidase with broad substrate specificity for alpha-1,4- and alpha-1,6-glucosides. Not required for isomaltose utilization, but overexpression allows the IMA1 null mutant to grow on isomaltose. The protein is Oligo-1,6-glucosidase IMA3 (IMA3) of Saccharomyces cerevisiae (strain ATCC 204508 / S288c) (Baker's yeast).